The primary structure comprises 162 residues: MTTSFYDLECKDKKGESFKFDQLKGKVVLIVNVASKCGFTPQYKELEELYKKYQDKGFVILGFPCNQFGKQEPGSDEQITEFCQLNYGVTFPIMKKIDVNGSNADSVYNYLKSQKAGLLGFKGIKWNFEKFLVDSNGKVVQRFSSLTKPSSLDQEIQSLLSK.

The active-site Cysteine sulfenic acid (-SOH) intermediate is the C37. A disulfide bond links C37 and C83.

This sequence belongs to the glutathione peroxidase family. In terms of assembly, monomer.

Its subcellular location is the cytoplasm. The protein localises to the nucleus. It localises to the mitochondrion outer membrane. The protein resides in the mitochondrion inner membrane. It carries out the reaction a hydroperoxide + [thioredoxin]-dithiol = an alcohol + [thioredoxin]-disulfide + H2O. Functionally, glutathione peroxidase-like protein that protects cells from phospholipid hydroperoxides and nonphospholipid peroxides during oxidative stress. Plays an important role in the oxidative stress-induced response in the presence of Ca(2+). Has peroxidase activity using preferentially thioredoxin as a reducing power. The redox state of the mitochondrial GPX2 is regulated by TRX1 and TRX2 (cytoplasmic thioredoxin), and by TRX3 (mitochondrial matrix thioredoxin). Involved in sporulation. The sequence is that of Glutathione peroxidase-like peroxiredoxin 2 from Saccharomyces cerevisiae (strain ATCC 204508 / S288c) (Baker's yeast).